The sequence spans 175 residues: Colicin-B immunity protein (175 aa).

Transmembrane regions (helical) follow at residues 14–32 (ILYAFSIIGIIPLMAILIL), 104–121 (CFWGPVFYAILIYITLFY), and 149–168 (IYFTVLTMTYAILLMPLLVI).

It localises to the cell inner membrane. Functionally, this protein is able to protect a cell, which harbors the plasmid ColB encoding colicin B, against colicin B. This chain is Colicin-B immunity protein (cbi), found in Escherichia coli.